Consider the following 249-residue polypeptide: 5'-nucleotidase SurE (249 aa).

A divalent metal cation contacts are provided by Asp9, Asp10, Ser40, and Asn92.

The protein belongs to the SurE nucleotidase family. A divalent metal cation is required as a cofactor.

The protein localises to the cytoplasm. It catalyses the reaction a ribonucleoside 5'-phosphate + H2O = a ribonucleoside + phosphate. In terms of biological role, nucleotidase that shows phosphatase activity on nucleoside 5'-monophosphates. The chain is 5'-nucleotidase SurE from Shewanella frigidimarina (strain NCIMB 400).